Consider the following 212-residue polypeptide: External core antigen (212 aa).

The N-terminal stretch at 1 to 19 is a signal peptide; it reads MQLFHLCLIISCSCPTVQA. The segment at 25 to 27 is HBEAG; the sequence is GWL. The tract at residues 165-212 is disordered; it reads NAPILSTLPETTVVRRRGRSPRRRTPSPRRRRSQSPRRRRSQSRESQC. Over residues 178–205 the composition is skewed to basic residues; that stretch reads VRRRGRSPRRRTPSPRRRRSQSPRRRRS. One copy of the 1; half-length repeat lies at 184-190; sequence SPRRRTP. A 3 X 8 AA repeats of S-P-R-R-R-R-S-Q region spans residues 184-206; it reads SPRRRTPSPRRRRSQSPRRRRSQ. Residues 184 to 212 constitute a propeptide that is removed on maturation; it reads SPRRRTPSPRRRRSQSPRRRRSQSRESQC. A run of 2 repeats spans residues 191 to 198 and 199 to 206.

The protein belongs to the orthohepadnavirus precore antigen family. Homodimerizes. In terms of processing, phosphorylated. Post-translationally, cleaved by host furin.

The protein resides in the secreted. Its subcellular location is the host nucleus. In terms of biological role, may regulate immune response to the intracellular capsid in acting as a T-cell tolerogen, by having an immunoregulatory effect which prevents destruction of infected cells by cytotoxic T-cells. This immune regulation may predispose to chronicity during perinatal infections and prevent severe liver injury during adult infections. This chain is External core antigen, found in Homo sapiens (Human).